Consider the following 496-residue polypeptide: Cytochrome P450 monooxygenase ausR (496 aa).

Residues isoleucine 12–proline 32 traverse the membrane as a helical segment. Cysteine 435 is a binding site for heme.

This sequence belongs to the cytochrome P450 family. Heme serves as cofactor.

The protein resides in the membrane. The protein operates within secondary metabolite biosynthesis; terpenoid biosynthesis. Its function is as follows. Cytochrome P450 monooxygenase; part of the gene cluster B that mediates the biosynthesis of the fungal meroterpenoid acetoxydehydroaustin. The first step of the pathway is the synthesis of 3,5-dimethylorsellinic acid by the polyketide synthase ausA. 3,5-dimethylorsellinic acid is then prenylated by the polyprenyl transferase ausN. Further epoxidation by the FAD-dependent monooxygenase ausM and cyclization by the probable terpene cyclase ausL lead to the formation of protoaustinoid A. Protoaustinoid A is then oxidized to spiro-lactone preaustinoid A3 by the combined action of the FAD-binding monooxygenases ausB and ausC, and the dioxygenase ausE. Acid-catalyzed keto-rearrangement and ring contraction of the tetraketide portion of preaustinoid A3 by ausJ lead to the formation of preaustinoid A4. The aldo-keto reductase ausK, with the help of ausH, is involved in the next step by transforming preaustinoid A4 into isoaustinone which is in turn hydroxylated by the P450 monooxygenase ausI to form austinolide. The cytochrome P450 monooxygenase ausG then modifies austinolide to austinol. Austinol is further acetylated to austin by the O-acetyltransferase ausP, which spontaneously changes to dehydroaustin. The cytochrome P450 monooxygenase then converts dehydroaustin is into 7-dehydrodehydroaustin. The hydroxylation catalyzed by ausR permits the second O-acetyltransferase ausQ to add an additional acetyl group to the molecule, leading to the formation of acetoxydehydroaustin. Due to genetic rearrangements of the clusters and the subsequent loss of some enzymes, the end product of the Penicillium brasilianum austinoid biosynthesis clusters is acetoxydehydroaustin. The sequence is that of Cytochrome P450 monooxygenase ausR from Penicillium brasilianum.